An 81-amino-acid polypeptide reads, in one-letter code: uncharacterized protein (81 aa).

The protein to Synechocystis PCC 6803 ssr2439.

In terms of biological role, may have a regulatory function. This is an uncharacterized protein from Synechococcus elongatus (strain ATCC 33912 / PCC 7942 / FACHB-805) (Anacystis nidulans R2).